Consider the following 471-residue polypeptide: Sestrin-2 (471 aa).

An N-acetylmethionine modification is found at Met1. Positions 57-230 (GLEALMSSGR…APSPPSEQST (174 aa)) are N-terminal domain; mediates the alkylhydroperoxide reductase activity. Residue Cys116 is the Cysteine sulfenic acid (-SOH) intermediate of the active site. Lys166 is covalently cross-linked (Glycyl lysine isopeptide (Lys-Gly) (interchain with G-Cter in ubiquitin)). The interval 212–241 (DPEGSPAPQAPSPPSEQSTPPSRDSLNHSG) is disordered. Ser240 is modified (phosphoserine). The tract at residues 299-471 (ANPDMLCFVE…ALRAITRYMT (173 aa)) is C-terminal domain; mediates TORC1 regulation. Residues 365–368 (TYNT), Thr377, and Glu442 contribute to the L-leucine site.

Belongs to the sestrin family. As to quaternary structure, interacts with the GATOR2 complex which is composed of MIOS, SEC13, SEH1L, WDR24 and WDR59; the interaction is negatively regulated by leucine. Conveys leucine availability via direct interaction with SEH1L and WDR24 components of the GATOR2 complex. Interacts with RRAGA, RRAGB, RRAGC and RRAGD; may function as a guanine nucleotide dissociation inhibitor for RRAGs and regulate them. May interact with the TORC2 complex. Interacts with KEAP1, RBX1, SQSTM and ULK1; to regulate the degradation of KEAP1. May also associate with the complex composed of TSC1, TSC2 and the AMP-responsive protein kinase/AMPK to regulate TORC1 signaling. May interact with PRDX1. Phosphorylated by ULK1 at multiple sites. In terms of processing, ubiquitinated at Lys-166 by RNF167 via 'Lys-63'-linked polyubiquitination in response to leucine deprivation: ubiquitination promotes SESN2-interaction with the GATOR2 complex, leading to inhibit the TORC1 signaling pathway. Deubiquitinated at Lys-166 by STAMBPL1, promoting the TORC1 signaling pathway. Ubiquitinated by RNF186; ubiquitination mediates proteasomal degradation.

It is found in the cytoplasm. It catalyses the reaction a hydroperoxide + L-cysteinyl-[protein] = S-hydroxy-L-cysteinyl-[protein] + an alcohol. In terms of biological role, functions as an intracellular leucine sensor that negatively regulates the mTORC1 signaling pathway through the GATOR complex. In absence of leucine, binds the GATOR subcomplex GATOR2 and prevents mTORC1 signaling. Binding of leucine to SESN2 disrupts its interaction with GATOR2 thereby activating the TORC1 signaling pathway. This stress-inducible metabolic regulator also plays a role in protection against oxidative and genotoxic stresses. May negatively regulate protein translation in response to endoplasmic reticulum stress, via mTORC1. May positively regulate the transcription by NFE2L2 of genes involved in the response to oxidative stress by facilitating the SQSTM1-mediated autophagic degradation of KEAP1. May also mediate TP53 inhibition of TORC1 signaling upon genotoxic stress. Moreover, may prevent the accumulation of reactive oxygen species (ROS) through the alkylhydroperoxide reductase activity born by the N-terminal domain of the protein. Was originally reported to contribute to oxidative stress resistance by reducing PRDX1. However, this could not be confirmed. This chain is Sestrin-2, found in Bos taurus (Bovine).